Here is a 183-residue protein sequence, read N- to C-terminus: Oligoribonuclease (183 aa).

The region spanning 10 to 173 (LIWIDLEMTG…ADIRESIAEL (164 aa)) is the Exonuclease domain. Residue Y131 is part of the active site.

It belongs to the oligoribonuclease family.

It localises to the cytoplasm. 3'-to-5' exoribonuclease specific for small oligoribonucleotides. The chain is Oligoribonuclease from Idiomarina loihiensis (strain ATCC BAA-735 / DSM 15497 / L2-TR).